The sequence spans 180 residues: Large ribosomal subunit protein uL10 (180 aa).

A disordered region spans residues 161-180; it reads SKAEGSEETESNETTETVEE. Residues 166-180 show a composition bias toward acidic residues; it reads SEETESNETTETVEE.

This sequence belongs to the universal ribosomal protein uL10 family. Part of the ribosomal stalk of the 50S ribosomal subunit. The N-terminus interacts with L11 and the large rRNA to form the base of the stalk. The C-terminus forms an elongated spine to which L12 dimers bind in a sequential fashion forming a multimeric L10(L12)X complex.

In terms of biological role, forms part of the ribosomal stalk, playing a central role in the interaction of the ribosome with GTP-bound translation factors. This Finegoldia magna (strain ATCC 29328 / DSM 20472 / WAL 2508) (Peptostreptococcus magnus) protein is Large ribosomal subunit protein uL10.